The sequence spans 277 residues: F420-dependent methylenetetrahydromethanopterin dehydrogenase (277 aa).

The protein belongs to the MTD family.

It catalyses the reaction 5,10-methylenetetrahydromethanopterin + oxidized coenzyme F420-(gamma-L-Glu)(n) + 2 H(+) = 5,10-methenyl-5,6,7,8-tetrahydromethanopterin + reduced coenzyme F420-(gamma-L-Glu)(n). The protein operates within one-carbon metabolism; methanogenesis from CO(2); 5,10-methylene-5,6,7,8-tetrahydromethanopterin from 5,10-methenyl-5,6,7,8-tetrahydromethanopterin (coenzyme F420 route): step 1/1. Catalyzes the reversible reduction of methenyl-H(4)MPT(+) to methylene-H(4)MPT. This Methanococcus maripaludis (strain C7 / ATCC BAA-1331) protein is F420-dependent methylenetetrahydromethanopterin dehydrogenase.